A 229-amino-acid polypeptide reads, in one-letter code: ATP synthase subunit a 1 (229 aa).

The next 6 membrane-spanning stretches (helical) occupy residues 25–45 (ADAV…SFLA), 86–106 (VATV…PGFF), 111–131 (NINT…VVGI), 142–162 (FCGP…IGHL), 181–201 (LVLI…MMLM), and 202–222 (GVLV…IYIQ).

The protein belongs to the ATPase A chain family. As to quaternary structure, F-type ATPases have 2 components, CF(1) - the catalytic core - and CF(0) - the membrane proton channel. CF(1) has five subunits: alpha(3), beta(3), gamma(1), delta(1), epsilon(1). CF(0) has three main subunits: a(1), b(2) and c(9-12). The alpha and beta chains form an alternating ring which encloses part of the gamma chain. CF(1) is attached to CF(0) by a central stalk formed by the gamma and epsilon chains, while a peripheral stalk is formed by the delta and b chains.

It localises to the cell inner membrane. Its function is as follows. Key component of the proton channel; it plays a direct role in the translocation of protons across the membrane. This chain is ATP synthase subunit a 1, found in Pelobacter propionicus (strain DSM 2379 / NBRC 103807 / OttBd1).